Here is a 1477-residue protein sequence, read N- to C-terminus: Neurexin-1 (1477 aa).

A signal peptide spans 1-30 (MGTALLQRGGCFLLCLSLLLLGCWAELGSG). In terms of domain architecture, Laminin G-like 1 spans 31 to 217 (LEFPGAEGQW…PPNSGGGSPC (187 aa)). At 31 to 1401 (LEFPGAEGQW…EVIRESSSTT (1371 aa)) the chain is on the extracellular side. Residues Asn-125 and Asn-190 are each glycosylated (N-linked (GlcNAc...) asparagine). Positions 198 to 221 (DSGEVKLDDEPPNSGGGSPCEAGE) are disordered. Residues 213–256 (GGSPCEAGEEGEGGVCLNGGVCSVVDDQAVCDCSRTGFRGKDCS) enclose the EGF-like 1 domain. Disulfide bonds link Cys-228-Cys-243 and Cys-245-Cys-255. 2 consecutive Laminin G-like domains span residues 283–473 (IATF…AFKC) and 480–672 (DPIT…KPSC). Ca(2+) contacts are provided by Asp-329, Leu-346, and Met-407. 5 disulfides stabilise this stretch: Cys-437–Cys-473, Cys-643–Cys-672, Cys-680–Cys-691, Cys-685–Cys-700, and Cys-702–Cys-712. An EGF-like 2 domain is found at 676 to 713 (TAKPCLSNPCKNNGMCRDGWNRYVCDCSGTGYLGRSCE). 2 Laminin G-like domains span residues 718–891 (VLSY…IDYC) and 905–1080 (DPVT…ERGC). Residues Asp-765 and Leu-782 each coordinate Ca(2+). Residue Asn-790 is glycosylated (N-linked (GlcNAc...) asparagine). Arg-841 lines the Ca(2+) pocket. 5 disulfide bridges follow: Cys-883–Cys-891, Cys-1052–Cys-1080, Cys-1087–Cys-1098, Cys-1092–Cys-1107, and Cys-1109–Cys-1119. The EGF-like 3 domain maps to 1083 to 1120 (PSTTCQEDSCSNQGVCLQQWDGFSCDCSMTSFSGPLCN). The region spanning 1126-1294 (YIFSKGGGQI…DANIAIVGNV (169 aa)) is the Laminin G-like 6 domain. Residues Asp-1176 and Val-1193 each contribute to the Ca(2+) site. Asn-1223 is a glycosylation site (N-linked (GlcNAc...) asparagine). Residues Ile-1245 and Asn-1247 each contribute to the Ca(2+) site. Residues 1325 to 1390 (TTTLATSTAR…AGGREPYPGS (66 aa)) are disordered. O-linked (Xyl...) (heparan sulfate) serine glycosylation occurs at Ser-1355. The chain crosses the membrane as a helical span at residues 1402 to 1422 (GMVVGIVAAAALCILILLYAM). The Cytoplasmic segment spans residues 1423–1477 (YKYRNRDEGSYHVDESRNYISNSAQSNGAVVKEKQPSSAKSSNKNKKNKDKEYYV). The tract at residues 1444 to 1470 (NSAQSNGAVVKEKQPSSAKSSNKNKKN) is interaction with CASK. A disordered region spans residues 1444-1477 (NSAQSNGAVVKEKQPSSAKSSNKNKKNKDKEYYV).

This sequence belongs to the neurexin family. Interacts (via laminin G-like domain 2 and/or laminin G-like domain 6) with NLGN1 forming a heterotetramer, where one NLGN1 dimer interacts with one NRXN1 dimer. Also interacts (via laminin G-like domain 2 and/or laminin G-like domain 6) with NLGN2, NLGN3 and NLGN4L; interactions with NLGN1, NLGN2, NLGN3 and NLGN4L are calcium-dependent. Interacts (via cytoplasmic C-terminal region) with CASK (via the PDZ, SH3 and guanylate kinase-like domains). Interacts (via cytoplasmic C-terminus) with CASKIN1 and APBA1. Interacts (via laminin G-like domain 2) with NXPH1 and NXPH3. Alpha-type isoforms (neurexin-1-alpha) interact (via laminin G-like domain 2 and/or laminin G-like domain 6) with DAG1 (via alpha-dystroglycan chain). Interacts with LRRTM1, LRRTM2, LRRTM3 and LRRTM4. Interacts with SYT13 and SYTL1. Interacts with CBLN1, CBLN2 and, less avidly, with CBLN4. Interacts with CLSTN3. O-glycosylated; contains heparan sulfate. Heparan sulfate attachment is required for synapse development by mediating interactions with neuroligins and LRRTM2. Brain.

Its subcellular location is the presynaptic cell membrane. Cell surface protein involved in cell-cell-interactions, exocytosis of secretory granules and regulation of signal transmission. Function is isoform-specific. Alpha-type isoforms have a long N-terminus with six laminin G-like domains and play an important role in synaptic signal transmission. Alpha-type isoforms play a role in the regulation of calcium channel activity and Ca(2+)-triggered neurotransmitter release at synapses and at neuromuscular junctions. They play an important role in Ca(2+)-triggered exocytosis of secretory granules in pituitary gland. They may affect their functions at synapses and in endocrine cells via their interactions with proteins from the exocytotic machinery. Likewise, alpha-type isoforms play a role in regulating the activity of postsynaptic NMDA receptors, a subtype of glutamate-gated ion channels. Both alpha-type and beta-type isoforms may play a role in the formation or maintenance of synaptic junctions via their interactions (via the extracellular domains) with neuroligin family members, CBLN1 or CBLN2. In vitro, triggers the de novo formation of presynaptic structures. May be involved in specification of excitatory synapses. Alpha-type isoforms were first identified as receptors for alpha-latrotoxin from spider venom. This is Neurexin-1 (NRXN1) from Homo sapiens (Human).